The primary structure comprises 78 residues: Small ribosomal subunit protein uS19m (78 aa).

It belongs to the universal ribosomal protein uS19 family.

The protein resides in the mitochondrion. The sequence is that of Small ribosomal subunit protein uS19m (RPS19) from Acanthamoeba castellanii (Amoeba).